A 199-amino-acid polypeptide reads, in one-letter code: Thymidylate kinase (199 aa).

7 to 14 serves as a coordination point for ATP; the sequence is GTEGVGKT.

Belongs to the thymidylate kinase family.

The enzyme catalyses dTMP + ATP = dTDP + ADP. In terms of biological role, phosphorylation of dTMP to form dTDP in both de novo and salvage pathways of dTTP synthesis. This Acinetobacter baumannii (strain ATCC 17978 / DSM 105126 / CIP 53.77 / LMG 1025 / NCDC KC755 / 5377) protein is Thymidylate kinase.